Consider the following 71-residue polypeptide: Small ribosomal subunit protein bS21 (71 aa).

Belongs to the bacterial ribosomal protein bS21 family.

This chain is Small ribosomal subunit protein bS21, found in Hydrogenovibrio crunogenus (strain DSM 25203 / XCL-2) (Thiomicrospira crunogena).